Here is a 123-residue protein sequence, read N- to C-terminus: Large ribosomal subunit protein bL12 (123 aa).

It belongs to the bacterial ribosomal protein bL12 family. As to quaternary structure, homodimer. Part of the ribosomal stalk of the 50S ribosomal subunit. Forms a multimeric L10(L12)X complex, where L10 forms an elongated spine to which 2 to 4 L12 dimers bind in a sequential fashion. Binds GTP-bound translation factors.

Its function is as follows. Forms part of the ribosomal stalk which helps the ribosome interact with GTP-bound translation factors. Is thus essential for accurate translation. The protein is Large ribosomal subunit protein bL12 of Borrelia duttonii (strain Ly).